The chain runs to 31 residues: Cyclotide mden-L (31 aa).

The segment at residues 1 to 31 (GSIPCGESCVYIPCISAVLGCSCKNKVCYRN) is a cross-link (cyclopeptide (Gly-Asn)). 3 disulfides stabilise this stretch: Cys5/Cys21, Cys9/Cys23, and Cys14/Cys28.

Belongs to the cyclotide family. Bracelet subfamily. This is a cyclic peptide.

In terms of biological role, probably participates in a plant defense mechanism. This is Cyclotide mden-L from Melicytus dentatus (Tree violet).